A 331-amino-acid chain; its full sequence is Betaine-homocysteine S-methyltransferase (331 aa).

The Hcy-binding domain occupies valine 3–valine 324. 3 residues coordinate Zn(2+): cysteine 243, cysteine 309, and cysteine 310.

It belongs to the Betaine-homocysteine S-methyltransferase, BHMT family. It depends on Zn(2+) as a cofactor.

It carries out the reaction L-homocysteine + glycine betaine = N,N-dimethylglycine + L-methionine. It participates in amino-acid biosynthesis; L-methionine biosynthesis via de novo pathway. In terms of biological role, involved in the regulation of homocysteine metabolism. Converts betaine and homocysteine to dimethylglycine and methionine, respectively. This is Betaine-homocysteine S-methyltransferase from Drosophila melanogaster (Fruit fly).